Reading from the N-terminus, the 377-residue chain is Enoyl reductase cheB (377 aa).

The enoyl reductase (ER) domain stretch occupies residues 18 to 361 (GGSLVIARDV…REISAEKLVV (344 aa)). 49-52 (CDFK) is an NADP(+) binding site. Substrate is bound at residue 137 to 144 (PCCIATMG). NADP(+)-binding positions include 173 to 176 (SSSV), 200 to 203 (SPKN), Tyr218, 265 to 266 (LE), and Thr283. 285 to 289 (GAIII) is a substrate binding site. Position 354–355 (354–355 (IS)) interacts with NADP(+).

It belongs to the zinc-containing alcohol dehydrogenase family. Heme is required as a cofactor.

The protein operates within secondary metabolite biosynthesis. In terms of biological role, enoyl reductase; part of the gene cluster that mediates the biosynthesis of chaetoglobosin A which has a unique inhibitory activity against actin polymerization in mammalian cells. Chaetoglobosin A and its intermediates are involved in the morphological differentiation of C.globosum. The first step of the pathway is the synthesis of prochaetoglobosin I via condensation of one acetyl-CoA, 8 malonyl-CoA, and a L-tryptophan molecule by the PKS-NRPS hybrid synthetase cheA, followed by reduction of backbone double bond to install desired geometry by the enoyl reductase cheB. Further multiple oxidation steps performed by the cytochrome P450 monooxygenases cheE and cheG, as well as by the FAD-linked oxidoreductase cheF, lead to the formation of chaetoglobosin A. Depending on the order of action of these reductases, distinct intermediates can be identified. Within the pathway, the cytochrome P450 monooxygenase cheE catalyzes a stereospecific epoxidation on prochaetoglobosin I, cytoglobosin D, and chaetoglobosin J intermediates. The FAD-linked oxidoreductase cheF performs dehydrogenation of the C-20 hydroxyl groups in the 20-dihyrochaetoglobosin A and cytoglobosin D intermediates. Finally, the cytochrome P450 monooxygenase cheG can catalyze the stereospecific dihydroxylation of prochaetoglobosin I and prochaetoglobosin IV at C-19 and C-20, respectively. The Diels-Alderase cheD may play a role in the post-PKS-NRPS biosynthetic steps catalyzing Diels-Alder cyclization. The sequence is that of Enoyl reductase cheB from Chaetomium globosum (strain ATCC 6205 / CBS 148.51 / DSM 1962 / NBRC 6347 / NRRL 1970) (Soil fungus).